The following is a 417-amino-acid chain: MPEANPFESLQEQLDDAGEFLDVNADVLERLKHPERVLETTLSVEMDDGTIETFKAFRSQFNGDRGPYKGGIRYHPGVTRDEVKALSGWMVYKTAVADIPYGGGKGGIILDPEEYSDSELERITRAFATELRPFIGEDKDVPAPDVNTGQREMNWIKDTYETLEDTTAPGVITGKALENGGSEGRVNATGRSTMFAAREVFDYLDRDLSDATVAVQGYGNAGSVAAKLIADQGADVVAVSDSSGAVHNPDGLDTRAVKAFKTETGSVSGYEGATEELSNEALLTMDVDLLVPAALENAIDEDLAHDVDADVVVEAANGPLTPDADDVLTERGVTVVPDILANAGGVTVSYFEWVQNRQRFQWTEDRVNEELEAIITDAFDAMTDAHEDAGTPNLRTAAYVVAVQRVVDAYEGSGSWP.

Lys105 is an active-site residue.

Belongs to the Glu/Leu/Phe/Val dehydrogenases family. Homohexamer.

It carries out the reaction L-glutamate + NADP(+) + H2O = 2-oxoglutarate + NH4(+) + NADPH + H(+). The protein is NADP-specific glutamate dehydrogenase A1 (gdhA1) of Halobacterium salinarum (Halobacterium halobium).